Here is a 274-residue protein sequence, read N- to C-terminus: RsbT co-antagonist protein RsbRA (274 aa).

The 116-residue stretch at 150–265 (SAPLIPVFEN…KGIQTALEMT (116 aa)) folds into the STAS domain. 2 positions are modified to phosphothreonine: Thr-171 and Thr-205.

In terms of assembly, interacts with RsbRB and RsbS in the stressosome. The stressosome probably also contains RsbRC and RsbRD. Phosphorylated by RsbT. This threonine phosphorylation abrogates the ability of RsbRA to stimulate RsbT in vitro.

Its function is as follows. Acts as a positive regulator of sigma-B activity in response to salt and heat stress by stimulating the activity of the RsbT kinase toward RsbS in vitro. In terms of biological role, one of 4 functionally non-identical RsbR paralogs, it functions in the environmental signaling branch of the general stress response. Negative regulator of sigma-B activity. Non-phosphorylated RsbS binds to RsbT, preventing its association with RsbU. Requires any one of RsbRA, RsbRB, RsbRC or RsbRD to sequester RsbT. When RsbS and the RsbR paralog(s) are phosphorylated, they release RsbT, which can then bind and activate RsbU. This Bacillus subtilis (strain 168) protein is RsbT co-antagonist protein RsbRA (rsbRA).